Consider the following 291-residue polypeptide: Nucleotide-binding protein lhv_0732 (291 aa).

Residue 13–20 participates in ATP binding; the sequence is GMSGAGKT. 61–64 contacts GTP; the sequence is DLRV.

This sequence belongs to the RapZ-like family.

In terms of biological role, displays ATPase and GTPase activities. In Lactobacillus helveticus (strain DPC 4571), this protein is Nucleotide-binding protein lhv_0732.